Here is a 79-residue protein sequence, read N- to C-terminus: UPF0180 protein BCG9842_B3897 (79 aa).

This sequence belongs to the UPF0180 family.

The polypeptide is UPF0180 protein BCG9842_B3897 (Bacillus cereus (strain G9842)).